The primary structure comprises 276 residues: Aldo-keto reductase Mkms_1985 (276 aa).

Residue tyrosine 50 is the Proton donor of the active site. NADPH-binding residues include leucine 190, isoleucine 228, lysine 230, serine 231, valine 232, arginine 236, serine 239, and asparagine 240. The disordered stretch occupies residues 257-276 (SSLEDGSRLGPDPKTFNFTG).

It belongs to the aldo/keto reductase family.

In Mycobacterium sp. (strain KMS), this protein is Aldo-keto reductase Mkms_1985.